The primary structure comprises 148 residues: Large ribosomal subunit protein uL15 (148 aa).

Residues 1-57 form a disordered region; sequence MRLNDVKPQKGSKKRRRRVGRGISAGQGASAGLGMRGQKSRSGSGTRPGFEGGQQPL. Residues 10-20 show a composition bias toward basic residues; sequence KGSKKRRRRVG. The segment covering 23–35 has biased composition (gly residues); sequence ISAGQGASAGLGM.

It belongs to the universal ribosomal protein uL15 family. As to quaternary structure, part of the 50S ribosomal subunit.

Functionally, binds to the 23S rRNA. The sequence is that of Large ribosomal subunit protein uL15 from Nostoc sp. (strain PCC 7120 / SAG 25.82 / UTEX 2576).